Reading from the N-terminus, the 167-residue chain is Large ribosomal subunit protein bL9 (167 aa).

The protein belongs to the bacterial ribosomal protein bL9 family.

Its function is as follows. Binds to the 23S rRNA. In Nitratidesulfovibrio vulgaris (strain ATCC 29579 / DSM 644 / CCUG 34227 / NCIMB 8303 / VKM B-1760 / Hildenborough) (Desulfovibrio vulgaris), this protein is Large ribosomal subunit protein bL9.